We begin with the raw amino-acid sequence, 324 residues long: Glutaminase 2 (324 aa).

Positions 75, 127, 171, 178, 202, 254, and 272 each coordinate substrate.

The protein belongs to the glutaminase family. In terms of assembly, homotetramer.

The enzyme catalyses L-glutamine + H2O = L-glutamate + NH4(+). The chain is Glutaminase 2 from Halalkalibacterium halodurans (strain ATCC BAA-125 / DSM 18197 / FERM 7344 / JCM 9153 / C-125) (Bacillus halodurans).